We begin with the raw amino-acid sequence, 338 residues long: GTPase Obg (338 aa).

One can recognise an Obg domain in the interval 1-159 (MQFIDEVKIH…RWLRLELKLM (159 aa)). The segment at 66-91 (KAGRGKNGMGKDRHGANGDDLTIPVP) is disordered. Residues 160–331 (ADVGLLGFPN…LLDEIARHLW (172 aa)) enclose the OBG-type G domain. GTP-binding positions include 166–173 (GFPNVGKS), 191–195 (FTTIK), 213–216 (DIPG), 283–286 (NKID), and 312–314 (SAA). 2 residues coordinate Mg(2+): Ser173 and Thr193.

It belongs to the TRAFAC class OBG-HflX-like GTPase superfamily. OBG GTPase family. Monomer. Mg(2+) is required as a cofactor.

Its subcellular location is the cytoplasm. Functionally, an essential GTPase which binds GTP, GDP and possibly (p)ppGpp with moderate affinity, with high nucleotide exchange rates and a fairly low GTP hydrolysis rate. Plays a role in control of the cell cycle, stress response, ribosome biogenesis and in those bacteria that undergo differentiation, in morphogenesis control. The chain is GTPase Obg from Geobacter metallireducens (strain ATCC 53774 / DSM 7210 / GS-15).